Here is a 217-residue protein sequence, read N- to C-terminus: Adapter protein MecA (217 aa).

Belongs to the MecA family. As to quaternary structure, homodimer.

Its function is as follows. Enables the recognition and targeting of unfolded and aggregated proteins to the ClpC protease or to other proteins involved in proteolysis. The protein is Adapter protein MecA of Listeria monocytogenes serovar 1/2a (strain ATCC BAA-679 / EGD-e).